Here is a 238-residue protein sequence, read N- to C-terminus: Tetraspanin-4 (238 aa).

At 1–13 (MARACLQAVKYLM) the chain is on the cytoplasmic side. A helical membrane pass occupies residues 14–34 (FAFNLLFWLGGCGVLGVGIWL). Topologically, residues 35 to 55 (AATQGSFATLSSSFPSLSAAN) are extracellular. A helical membrane pass occupies residues 56 to 76 (LLIITGAFVMAIGFVGCLGAI). Residues 77–85 (KENKCLLLT) lie on the Cytoplasmic side of the membrane. A helical transmembrane segment spans residues 86-106 (FFLLLLLVFLLEATIAILFFA). Over 107-201 (YTDKIDRYAQ…ETVKVWLQEN (95 aa)) the chain is Extracellular. N-linked (GlcNAc...) asparagine glycans are attached at residues Asn152 and Asn161. A helical transmembrane segment spans residues 202 to 222 (LLAVGIFGLCTALVQILGLTF). Topologically, residues 223–238 (AMTMYCQVVKADTYCA) are cytoplasmic.

Belongs to the tetraspanin (TM4SF) family. In terms of assembly, forms a complex with integrins.

The protein localises to the membrane. This Pongo abelii (Sumatran orangutan) protein is Tetraspanin-4 (TSPAN4).